The sequence spans 442 residues: ATP-dependent protease ATPase subunit HslU (442 aa).

ATP-binding positions include isoleucine 18, 60-65, aspartate 255, glutamate 320, and arginine 392; that span reads GVGKTE.

This sequence belongs to the ClpX chaperone family. HslU subfamily. As to quaternary structure, a double ring-shaped homohexamer of HslV is capped on each side by a ring-shaped HslU homohexamer. The assembly of the HslU/HslV complex is dependent on binding of ATP.

The protein resides in the cytoplasm. In terms of biological role, ATPase subunit of a proteasome-like degradation complex; this subunit has chaperone activity. The binding of ATP and its subsequent hydrolysis by HslU are essential for unfolding of protein substrates subsequently hydrolyzed by HslV. HslU recognizes the N-terminal part of its protein substrates and unfolds these before they are guided to HslV for hydrolysis. The sequence is that of ATP-dependent protease ATPase subunit HslU from Aeromonas hydrophila subsp. hydrophila (strain ATCC 7966 / DSM 30187 / BCRC 13018 / CCUG 14551 / JCM 1027 / KCTC 2358 / NCIMB 9240 / NCTC 8049).